Here is a 432-residue protein sequence, read N- to C-terminus: Putative D-alanyl-D-alanine carboxypeptidase (432 aa).

Residues 7 to 25 (ATVLLTFSLSAFAVEYPVL) traverse the membrane as a helical; Signal-anchor segment.

Belongs to the peptidase S12 family. YfeW subfamily.

It is found in the cell inner membrane. The enzyme catalyses Preferential cleavage: (Ac)2-L-Lys-D-Ala-|-D-Ala. Also transpeptidation of peptidyl-alanyl moieties that are N-acyl substituents of D-alanine.. The chain is Putative D-alanyl-D-alanine carboxypeptidase from Salmonella heidelberg (strain SL476).